A 138-amino-acid chain; its full sequence is Small ribosomal subunit protein uS11c (138 aa).

It belongs to the universal ribosomal protein uS11 family. Part of the 30S ribosomal subunit.

The protein localises to the plastid. It localises to the chloroplast. The polypeptide is Small ribosomal subunit protein uS11c (Nandina domestica (Heavenly bamboo)).